Here is a 289-residue protein sequence, read N- to C-terminus: (+)-kolavelool synthase (289 aa).

Belongs to the diterpene synthase family.

It catalyses the reaction (+)-kolavenyl diphosphate + H2O = (+)-kolavelool + diphosphate. Involved in the biosynthesis of (+)-O-methylkolavelool. Catalyzes the biosynthesis of (+)-kolavelool from (+)-kolavenyl diphosphate via the release of the diphosphate moiety through the nucleophilic addition of a water molecule. The protein is (+)-kolavelool synthase of Herpetosiphon aurantiacus (strain ATCC 23779 / DSM 785 / 114-95).